The sequence spans 306 residues: UDP-3-O-acyl-N-acetylglucosamine deacetylase (306 aa).

Residues histidine 79, histidine 238, and aspartate 242 each contribute to the Zn(2+) site. The active-site Proton donor is the histidine 265.

The protein belongs to the LpxC family. It depends on Zn(2+) as a cofactor.

It carries out the reaction a UDP-3-O-[(3R)-3-hydroxyacyl]-N-acetyl-alpha-D-glucosamine + H2O = a UDP-3-O-[(3R)-3-hydroxyacyl]-alpha-D-glucosamine + acetate. It functions in the pathway glycolipid biosynthesis; lipid IV(A) biosynthesis; lipid IV(A) from (3R)-3-hydroxytetradecanoyl-[acyl-carrier-protein] and UDP-N-acetyl-alpha-D-glucosamine: step 2/6. In terms of biological role, catalyzes the hydrolysis of UDP-3-O-myristoyl-N-acetylglucosamine to form UDP-3-O-myristoylglucosamine and acetate, the committed step in lipid A biosynthesis. The chain is UDP-3-O-acyl-N-acetylglucosamine deacetylase from Hamiltonella defensa subsp. Acyrthosiphon pisum (strain 5AT).